The following is a 92-amino-acid chain: Large ribosomal subunit protein bL27 (92 aa).

The segment at 1-22 (MAHTKAGGSTRNGRDSRGQRLG) is disordered.

This sequence belongs to the bacterial ribosomal protein bL27 family.

This is Large ribosomal subunit protein bL27 from Mycoplasmopsis agalactiae (strain NCTC 10123 / CIP 59.7 / PG2) (Mycoplasma agalactiae).